The primary structure comprises 229 residues: Heptaprenylglyceryl phosphate synthase (229 aa).

Lys-12 provides a ligand contact to sn-glycerol 1-phosphate. Residues Asp-14 and Thr-40 each coordinate Mg(2+). Sn-glycerol 1-phosphate-binding positions include 159 to 164 (YIEYSG), Gly-189, and 209 to 210 (GN).

It belongs to the GGGP/HepGP synthase family. Group I subfamily. In terms of assembly, homodimer. Requires Mg(2+) as cofactor.

It carries out the reaction sn-glycerol 1-phosphate + all-trans-heptaprenyl diphosphate = 3-heptaprenyl-sn-glycero-1-phosphate + diphosphate. Its pathway is membrane lipid metabolism; glycerophospholipid metabolism. In terms of biological role, prenyltransferase that catalyzes in vivo the transfer of the heptaprenyl moiety of heptaprenyl pyrophosphate (HepPP; 35 carbon atoms) to the C3 hydroxyl of sn-glycerol-1-phosphate (G1P), producing heptaprenylglyceryl phosphate (HepGP). This reaction is an ether-bond-formation step in the biosynthesis of archaea-type G1P-based membrane lipids found in Bacillales. The polypeptide is Heptaprenylglyceryl phosphate synthase (Staphylococcus carnosus (strain TM300)).